We begin with the raw amino-acid sequence, 744 residues long: Catalase-peroxidase (744 aa).

The signal sequence occupies residues 1-22; sequence MSPRARRCTDRCARMSERSMNA. Residues 114–234 constitute a cross-link (tryptophyl-tyrosyl-methioninium (Trp-Tyr) (with M-260)); that stretch reads WHSAGTYRLA…LGATEMGLIY (121 aa). The Proton acceptor role is filled by histidine 115. Residues 234-260 constitute a cross-link (tryptophyl-tyrosyl-methioninium (Tyr-Met) (with W-114)); it reads YVNPEGPDRNGDPISAAKFIRETFARM. Histidine 275 is a binding site for heme b.

It belongs to the peroxidase family. Peroxidase/catalase subfamily. As to quaternary structure, homodimer or homotetramer. Heme b serves as cofactor. In terms of processing, formation of the three residue Trp-Tyr-Met cross-link is important for the catalase, but not the peroxidase activity of the enzyme.

It carries out the reaction H2O2 + AH2 = A + 2 H2O. The enzyme catalyses 2 H2O2 = O2 + 2 H2O. Functionally, bifunctional enzyme with both catalase and broad-spectrum peroxidase activity. The sequence is that of Catalase-peroxidase from Azorhizobium caulinodans (strain ATCC 43989 / DSM 5975 / JCM 20966 / LMG 6465 / NBRC 14845 / NCIMB 13405 / ORS 571).